A 252-amino-acid polypeptide reads, in one-letter code: MSLPATFDLTTEDAQLLLAANTHLGARNVQVHQEPYVFKTRPDGVNVVDVGKTWEKLVLAARIIAAIPNPEDIVAISSRTFGQRAVLKFSAHTGATPIAGRFTPGSFTNYITRSFKEPRLIIVTDPRSDAQAIKEASYVNIPVIALTDLDSPSEYVDVAIPCNNRGKHSIGLIWYLLAREVLRLRGALVDRTQPWSVMPDLYFYRNPEEIEQQVAEETAGAATEEEEAKEEVTEEQTEATEWAEETTEAVAW.

N-acetylserine is present on S2. Low complexity predominate over residues 213 to 222 (QVAEETAGAA). The interval 213 to 252 (QVAEETAGAATEEEEAKEEVTEEQTEATEWAEETTEAVAW) is disordered. The segment covering 223–252 (TEEEEAKEEVTEEQTEATEWAEETTEAVAW) has biased composition (acidic residues).

Belongs to the universal ribosomal protein uS2 family. In terms of assembly, component of the small ribosomal subunit. Mature ribosomes consist of a small (40S) and a large (60S) subunit. The 40S subunit contains about 33 different proteins and 1 molecule of RNA (18S). The 60S subunit contains about 49 different proteins and 3 molecules of RNA (25S, 5.8S and 5S). Interacts with RPS21.

The protein localises to the cytoplasm. Functionally, required for the assembly and/or stability of the 40S ribosomal subunit. Required for the processing of the 20S rRNA-precursor to mature 18S rRNA in a late step of the maturation of 40S ribosomal subunits. The chain is Small ribosomal subunit protein uS2 from Zygosaccharomyces rouxii (strain ATCC 2623 / CBS 732 / NBRC 1130 / NCYC 568 / NRRL Y-229).